We begin with the raw amino-acid sequence, 203 residues long: UPF0637 protein SERP0693 (203 aa).

Belongs to the UPF0637 family.

The polypeptide is UPF0637 protein SERP0693 (Staphylococcus epidermidis (strain ATCC 35984 / DSM 28319 / BCRC 17069 / CCUG 31568 / BM 3577 / RP62A)).